The sequence spans 111 residues: uncharacterized protein (111 aa).

Gly2 carries N-myristoyl glycine; by host lipidation.

This is an uncharacterized protein from Acanthamoeba polyphaga mimivirus (APMV).